The chain runs to 66 residues: Beta-defensin 13 (66 aa).

The signal sequence occupies residues 1-22 (MRIFSLIVAGLVLLIQLHPAKG). 3 disulfides stabilise this stretch: cysteine 30–cysteine 59, cysteine 37–cysteine 51, and cysteine 41–cysteine 60.

It belongs to the beta-defensin family.

It localises to the secreted. Has antibacterial activity. This is Beta-defensin 13 (Defb13) from Rattus norvegicus (Rat).